We begin with the raw amino-acid sequence, 217 residues long: Adenylate kinase (217 aa).

10-15 is a binding site for ATP; that stretch reads GAGKGT. An NMP region spans residues 30–59; sequence STGDMFRAAIKAGTALGMKAKEYMDAGSLV. AMP-binding positions include Thr31, Arg36, 57 to 59, 85 to 88, and Gln92; these read SLV and GFPR. Positions 126-163 are LID; it reads GRRICRQCGGTYHMVFNPPAAEAVCDKCGGELYQRSDD. Position 127 (Arg127) interacts with ATP. Zn(2+)-binding residues include Cys130 and Cys133. 136–137 contributes to the ATP binding site; it reads TY. The Zn(2+) site is built by Cys150 and Cys153. AMP-binding residues include Arg160 and Arg171. Gln199 provides a ligand contact to ATP.

Belongs to the adenylate kinase family. Monomer.

It localises to the cytoplasm. The enzyme catalyses AMP + ATP = 2 ADP. Its pathway is purine metabolism; AMP biosynthesis via salvage pathway; AMP from ADP: step 1/1. In terms of biological role, catalyzes the reversible transfer of the terminal phosphate group between ATP and AMP. Plays an important role in cellular energy homeostasis and in adenine nucleotide metabolism. In Desulfitobacterium hafniense (strain DSM 10664 / DCB-2), this protein is Adenylate kinase.